The chain runs to 330 residues: Transcription factor TGA2 (330 aa).

Residues 1 to 48 are disordered; it reads MADTSPRTDVSTDDDTDHPDLGSEGALVNTAASDSSDRSKGKMDQKTL. Residues 35-47 show a composition bias toward basic and acidic residues; the sequence is SSDRSKGKMDQKT. One can recognise a bZIP domain in the interval 44–107; sequence DQKTLRRLAQ…GTGDQAHSTG (64 aa). 2 coiled-coil regions span residues 45 to 142 and 217 to 244; these read QKTL…HAGD and INNL…SLAD. The segment at 46–66 is basic motif; that stretch reads KTLRRLAQNREAARKSRLRKK. The interval 72–86 is leucine-zipper; the sequence is LENSRLKLTQLEQEL. One can recognise a DOG1 domain in the interval 111-327; that stretch reads ALAFDAEHSR…RALSSLWLAR (217 aa).

The protein belongs to the bZIP family. As to quaternary structure, binds DNA as a dimer. Interacts with NPR1, NPR3 and NPR4. Interacts with GRXC7/ROXY1 and GRXC9/GRX480. Expressed in the whole plant.

The protein localises to the nucleus. Functionally, transcriptional activator that binds specifically to the DNA sequence 5'-TGACG-3'. Recognizes ocs elements like the as-1 motif of the cauliflower mosaic virus 35S promoter. Binding to the as-1-like cis elements mediate auxin- and salicylic acid-inducible transcription. Required to induce the systemic acquired resistance (SAR) via the regulation of pathogenesis-related genes expression. Binding to the as-1 element of PR-1 promoter is salicylic acid-inducible and mediated by NPR1. Could also bind to the C-boxes (5'-ATGACGTCAT-3') with high affinity. This chain is Transcription factor TGA2 (TGA2), found in Arabidopsis thaliana (Mouse-ear cress).